Reading from the N-terminus, the 163-residue chain is Large ribosomal subunit protein uL10 (163 aa).

The protein belongs to the universal ribosomal protein uL10 family. Part of the ribosomal stalk of the 50S ribosomal subunit. The N-terminus interacts with L11 and the large rRNA to form the base of the stalk. The C-terminus forms an elongated spine to which L12 dimers bind in a sequential fashion forming a multimeric L10(L12)X complex.

Forms part of the ribosomal stalk, playing a central role in the interaction of the ribosome with GTP-bound translation factors. This is Large ribosomal subunit protein uL10 (rplJ) from Haemophilus influenzae (strain ATCC 51907 / DSM 11121 / KW20 / Rd).